The sequence spans 258 residues: Isoprenyl transferase 2 (258 aa).

Pro residues predominate over residues 1–18 (MNFPPIHPSTPKMTPPDL). The interval 1-21 (MNFPPIHPSTPKMTPPDLDPQ) is disordered. Asp32 is an active-site residue. Asp32 is a binding site for Mg(2+). Substrate is bound by residues 33–36 (GNGR), Trp37, Arg45, His49, and 77–79 (STE). Asn80 (proton acceptor) is an active-site residue. Residues Trp81, Arg83, Arg200, and 206–208 (RLS) contribute to the substrate site. Glu219 is a Mg(2+) binding site.

This sequence belongs to the UPP synthase family. As to quaternary structure, homodimer. Mg(2+) serves as cofactor.

Its function is as follows. Catalyzes the condensation of isopentenyl diphosphate (IPP) with allylic pyrophosphates generating different type of terpenoids. The chain is Isoprenyl transferase 2 from Nostoc sp. (strain PCC 7120 / SAG 25.82 / UTEX 2576).